The sequence spans 84 residues: Putative membrane protein insertion efficiency factor (84 aa).

The protein belongs to the UPF0161 family.

It is found in the cell inner membrane. Its function is as follows. Could be involved in insertion of integral membrane proteins into the membrane. The polypeptide is Putative membrane protein insertion efficiency factor (Shewanella frigidimarina (strain NCIMB 400)).